The sequence spans 126 residues: DNA-directed RNA polymerase subunit omega (126 aa).

The protein belongs to the RNA polymerase subunit omega family. The RNAP catalytic core consists of 2 alpha, 1 beta, 1 beta' and 1 omega subunit. When a sigma factor is associated with the core the holoenzyme is formed, which can initiate transcription.

The enzyme catalyses RNA(n) + a ribonucleoside 5'-triphosphate = RNA(n+1) + diphosphate. Its function is as follows. Promotes RNA polymerase assembly. Latches the N- and C-terminal regions of the beta' subunit thereby facilitating its interaction with the beta and alpha subunits. This is DNA-directed RNA polymerase subunit omega from Paramagnetospirillum magneticum (strain ATCC 700264 / AMB-1) (Magnetospirillum magneticum).